A 1332-amino-acid polypeptide reads, in one-letter code: Aldehyde oxidase 1 (1332 aa).

In terms of domain architecture, 2Fe-2S ferredoxin-type spans 4 to 91 (STLYFYVNGR…GAAVTTVEGV (88 aa)). [2Fe-2S] cluster is bound by residues cysteine 43, cysteine 48, cysteine 51, and cysteine 73. Glutamine 112 lines the Mo-molybdopterin pocket. [2Fe-2S] cluster is bound by residues cysteine 113, cysteine 116, cysteine 148, and cysteine 150. Cysteine 150 contributes to the Mo-molybdopterin binding site. The FAD-binding PCMH-type domain maps to 234–419 (FTGDRVTWIS…LSVTIPYSRK (186 aa)). Residues 262-269 (VVMGNTSV), alanine 343, serine 352, histidine 356, aspartate 365, and leucine 409 each bind FAD. Residues 800–801 (AF), methionine 1041, 1082–1085 (GSVV), glutamine 1197, and leucine 1262 contribute to the Mo-molybdopterin site. Catalysis depends on glutamate 1264, which acts as the Proton acceptor; for azaheterocycle hydroxylase activity.

The protein belongs to the xanthine dehydrogenase family. In terms of assembly, homodimer. [2Fe-2S] cluster is required as a cofactor. The cofactor is FAD. Requires Mo-molybdopterin as cofactor. Expressed in liver.

Its subcellular location is the cytoplasm. It catalyses the reaction an aldehyde + O2 + H2O = a carboxylate + H2O2 + H(+). The catalysed reaction is retinal + O2 + H2O = retinoate + H2O2 + H(+). Its activity is regulated as follows. Inhibited by menadione and isovanillin. Not inhibited by allopurinol, a xanthine dehydrogenase potent inhibitor. In terms of biological role, oxidase with broad substrate specificity, oxidizing aromatic azaheterocycles, such as N1-methylnicotinamide, N-methylphthalazinium and phthalazine, as well as aldehydes, such as benzaldehyde, retinal, pyridoxal, and vanillin. Plays a key role in the metabolism of xenobiotics and drugs containing aromatic azaheterocyclic substituents. Participates in the bioactivation of prodrugs such as famciclovir, catalyzing the oxidation step from 6-deoxypenciclovir to penciclovir, which is a potent antiviral agent. Is probably involved in the regulation of reactive oxygen species homeostasis. May be a prominent source of superoxide generation via the one-electron reduction of molecular oxygen. May also catalyze nitric oxide (NO) production via the reduction of nitrite to NO with NADH or aldehyde as electron donor. May play a role in adipogenesis. The polypeptide is Aldehyde oxidase 1 (Cavia porcellus (Guinea pig)).